The following is a 495-amino-acid chain: Probable cytosol aminopeptidase (495 aa).

Residues K266 and D271 each coordinate Mn(2+). K278 is a catalytic residue. 3 residues coordinate Mn(2+): D289, D348, and E350. The active site involves R352.

This sequence belongs to the peptidase M17 family. Mn(2+) serves as cofactor.

It localises to the cytoplasm. The catalysed reaction is Release of an N-terminal amino acid, Xaa-|-Yaa-, in which Xaa is preferably Leu, but may be other amino acids including Pro although not Arg or Lys, and Yaa may be Pro. Amino acid amides and methyl esters are also readily hydrolyzed, but rates on arylamides are exceedingly low.. The enzyme catalyses Release of an N-terminal amino acid, preferentially leucine, but not glutamic or aspartic acids.. Its function is as follows. Presumably involved in the processing and regular turnover of intracellular proteins. Catalyzes the removal of unsubstituted N-terminal amino acids from various peptides. The polypeptide is Probable cytosol aminopeptidase (Pseudomonas paraeruginosa (strain DSM 24068 / PA7) (Pseudomonas aeruginosa (strain PA7))).